Reading from the N-terminus, the 495-residue chain is GTPase Der (495 aa).

EngA-type G domains lie at Pro3–Glu166 and Ile208–Thr381. Residues Gly9–Ser16, Asp56–Ile60, Asn118–Asp121, Gly214–Ser221, Asp261–Val265, and Asn326–Asp329 each bind GTP. Positions Lys382–Glu466 constitute a KH-like domain.

The protein belongs to the TRAFAC class TrmE-Era-EngA-EngB-Septin-like GTPase superfamily. EngA (Der) GTPase family. As to quaternary structure, associates with the 50S ribosomal subunit.

Its function is as follows. GTPase that plays an essential role in the late steps of ribosome biogenesis. The protein is GTPase Der of Yersinia pseudotuberculosis serotype IB (strain PB1/+).